A 216-amino-acid chain; its full sequence is Guanylate kinase (216 aa).

The region spanning 11–189 (GVLIVISGPS…AVKKIEAILL (179 aa)) is the Guanylate kinase-like domain. Residue 18–25 (GPSGAGKG) participates in ATP binding.

Belongs to the guanylate kinase family.

The protein resides in the cytoplasm. It carries out the reaction GMP + ATP = GDP + ADP. In terms of biological role, essential for recycling GMP and indirectly, cGMP. The chain is Guanylate kinase (gmk) from Clostridium perfringens (strain 13 / Type A).